The following is a 529-amino-acid chain: 56 kDa type-specific antigen (529 aa).

The first 22 residues, 1 to 22 (MKKIMLIASAMSALSLPFSASA), serve as a signal peptide directing secretion. The helical transmembrane segment at 67 to 87 (LTTSMPFGGTLAAGMTIAPGF) threads the bilayer. Over residues 106–116 (GKTGSDADIRS) the composition is skewed to basic and acidic residues. Disordered stretches follow at residues 106–134 (GKTG…PQPT) and 392–424 (DGGC…KGKE). Residues 477-492 (TGMVASGALGVAINAA) form a helical membrane-spanning segment.

The protein resides in the cell membrane. In terms of biological role, may be an adherent factor for rickettsial adsorption to the host-cell surface and a determinant of virulence of individual rickettsial strain. It is the major outer membrane protein. This is 56 kDa type-specific antigen from Orientia tsutsugamushi (Rickettsia tsutsugamushi).